Reading from the N-terminus, the 132-residue chain is Small ribosomal subunit protein uS11 (132 aa).

The protein belongs to the universal ribosomal protein uS11 family. As to quaternary structure, part of the 30S ribosomal subunit. Interacts with proteins S7 and S18. Binds to IF-3.

Functionally, located on the platform of the 30S subunit, it bridges several disparate RNA helices of the 16S rRNA. Forms part of the Shine-Dalgarno cleft in the 70S ribosome. This is Small ribosomal subunit protein uS11 from Bifidobacterium animalis subsp. lactis (strain AD011).